The chain runs to 846 residues: Disrupted in schizophrenia 1 homolog (846 aa).

Disordered stretches follow at residues 1 to 53 (MQGA…IGFL), 127 to 147 (HSGVHSGNDRRQSERLTGDSG), 231 to 257 (EAEPLHQSPQEMAAEGSGSDRPHGEPR), 277 to 312 (TRSNRQPECGMVSSSDAGFSSQDASPAGGRSDQDGG), and 409 to 436 (LHGAPQRAGSDDPEAPLEGQRRTTAQDS). The interaction with MAP1A stretch occupies residues 1–288 (MQGAGSRGAW…SNRQPECGMV (288 aa)). 2 stretches are compositionally biased toward basic and acidic residues: residues 133-143 (GNDRRQSERLT) and 248-257 (GSDRPHGEPR). The segment covering 277–300 (TRSNRQPECGMVSSSDAGFSSQDA) has biased composition (polar residues). An interaction with TRAF3IP1 region spans residues 289-686 (SSSDAGFSSQ…LERVWKADLE (398 aa)). Residues 429-587 (RRTTAQDSLP…LLEAKMLALS (159 aa)) are required for localization to punctate cytoplasmic foci. Positions 435-846 (DSLPGLAVTR…STAGAQEAED (412 aa)) are necessary and sufficient for interaction with PCNT and localization at the centrosome. A coiled-coil region spans residues 440 to 489 (LAVTRRDWLMREKEQLQKEIEALRARVSVLEAKEQRLSQELEDQEMLLRW). The interval 588-846 (GSCFSTAKEL…STAGAQEAED (259 aa)) is interaction with ATF4 and ATF5. The interval 721-846 (TAALAVPRTP…STAGAQEAED (126 aa)) is interaction with NDEL1 and PAFAH1B1. The interval 721 to 846 (TAALAVPRTP…STAGAQEAED (126 aa)) is interaction with PAFAH1B1. The segment at 795–828 (GHDEALFQSLQGELQMVKETLQTMFLQLQPAKEA) is interaction with NDEL1.

Interacts with NDEL1. Interacts with CCDC88A (via C-terminus); the interaction is direct. Interacts with GSK3B. Interacts with tubulin alpha, ACTN2, ANKHD1, ATF4, ATF5, CEP63, EIF3S3, MAP1A, NDEL1, PAFAH1B1, RANBP9, SPTBN4, SYNE1 and TRAF3IP1. Interaction with microtubules may be mediated in part by TRAF3IP1. Interacts (via C-terminal) with PCNT. Interacts with CHCHD6. Interacts with CCDC141. Interacts with FBXW7, the substrate-recognition component of a SCF (SKP1-CUL1-F-box protein) E3 ubiquitin-protein ligase complex; the interaction targets DISC1 for proteasomal degradation. Interacts with ZNF365. Interacts with ATF4; inhibiting ATF4 transcription factor activity by disrupting ATF4 dimerization and DNA-binding. Interacts with PDE4B. Ubiquitinated. Ubiquitination with 'Lys-48'-linked polyubiquitin chains leads to its proteasomal degradation. Expressed in brain, heart, kidney, liver and thymus. Within the brain expression is high in the cerebral cortex, hippocampus and olfactory bulb and is also seen at lower levels in the cerebellum (at protein level).

The protein resides in the cytoplasm. It localises to the cytoskeleton. Its subcellular location is the mitochondrion. It is found in the microtubule organizing center. The protein localises to the centrosome. The protein resides in the postsynaptic density. Its function is as follows. Involved in the regulation of multiple aspects of embryonic and adult neurogenesis. Required for neural progenitor proliferation in the ventrical/subventrical zone during embryonic brain development and in the adult dentate gyrus of the hippocampus. Participates in the Wnt-mediated neural progenitor proliferation as a positive regulator by modulating GSK3B activity and CTNNB1 abundance. Plays a role as a modulator of the AKT-mTOR signaling pathway controlling the tempo of the process of newborn neurons integration during adult neurogenesis, including neuron positioning, dendritic development and synapse formation. Inhibits the activation of AKT-mTOR signaling upon interaction with CCDC88A. Regulates the migration of early-born granule cell precursors toward the dentate gyrus during the hippocampal development. Inhibits ATF4 transcription factor activity in neurons by disrupting ATF4 dimerization and DNA-binding. Plays a role, together with PCNT, in the microtubule network formation. The sequence is that of Disrupted in schizophrenia 1 homolog from Rattus norvegicus (Rat).